Consider the following 292-residue polypeptide: Enoyl-CoA hydratase domain-containing protein 2, mitochondrial (292 aa).

The N-terminal 35 residues, 1–35, are a transit peptide targeting the mitochondrion; that stretch reads MLRVLCLLRPWRPLRARGCASDGAAGGSEIQVRAL. Lys97 bears the N6-acetyllysine; alternate mark. Lys97 is modified (N6-succinyllysine; alternate).

It belongs to the enoyl-CoA hydratase/isomerase family.

Its subcellular location is the mitochondrion. This Homo sapiens (Human) protein is Enoyl-CoA hydratase domain-containing protein 2, mitochondrial (ECHDC2).